A 23-amino-acid chain; its full sequence is Dermaseptin III-like peptide (23 aa).

Expressed by the skin glands.

Its subcellular location is the secreted. Its function is as follows. Possesses a potent antimicrobial activity against bacteria, fungi and protozoa. Probably acts by disturbing membrane functions with its amphipathic structure. The protein is Dermaseptin III-like peptide of Phyllomedusa burmeisteri (Brazilian common walking leaf frog).